Here is a 199-residue protein sequence, read N- to C-terminus: Outer-membrane lipoprotein LolB (199 aa).

The N-terminal stretch at 1–28 is a signal peptide; sequence MSACPAPRSPFRWLHAFTLCLLLAVLAG. Cysteine 29 carries the N-palmitoyl cysteine lipid modification. The S-diacylglycerol cysteine moiety is linked to residue cysteine 29.

This sequence belongs to the LolB family. As to quaternary structure, monomer.

The protein resides in the cell outer membrane. Its function is as follows. Plays a critical role in the incorporation of lipoproteins in the outer membrane after they are released by the LolA protein. The sequence is that of Outer-membrane lipoprotein LolB from Bordetella bronchiseptica (strain ATCC BAA-588 / NCTC 13252 / RB50) (Alcaligenes bronchisepticus).